We begin with the raw amino-acid sequence, 158 residues long: Large ribosomal subunit protein uL16 (158 aa).

The tract at residues 1-22 is disordered; the sequence is MLSPKRTKYRKQQRGRMKGKAT.

It belongs to the universal ribosomal protein uL16 family. As to quaternary structure, part of the 50S ribosomal subunit.

Its function is as follows. Binds 23S rRNA and is also seen to make contacts with the A and possibly P site tRNAs. This Synechococcus sp. (strain JA-3-3Ab) (Cyanobacteria bacterium Yellowstone A-Prime) protein is Large ribosomal subunit protein uL16.